Here is a 69-residue protein sequence, read N- to C-terminus: Toxin CSTX-11 (69 aa).

4 disulfides stabilise this stretch: Cys-6/Cys-21, Cys-13/Cys-30, Cys-20/Cys-47, and Cys-32/Cys-45.

Expressed by the venom gland.

It is found in the secreted. Its subcellular location is the target cell membrane. Functionally, spider venom toxin that shows calcium channel blocking activity and exhibits cytolytic activity by affecting the outer leaflet curvature and/or pore formation across the membrane. It blocks L-type calcium channels (Cav1/CACNA1) in mammalian neurons at nanomolar concentrations. Furthermore, it produces a slow voltage-independent block of mid/low and high voltage-activated calcium channels in cockroach neurons. Potassium ions, histamine, M-ctenitoxin-Cs1a (AC P83619), CSTX-9 (AC P58604), and CSTX-13 (AC P83919) synergistically increase the insecticidal activity of this toxin. In vivo, it causes paralysis in blow flies and provokes death in drosophila. This is Toxin CSTX-11 from Cupiennius salei (American wandering spider).